The primary structure comprises 194 residues: Probable GTP-binding protein EngB (194 aa).

Positions 22-194 (DLPEYALAGR…AWQFIKEGME (173 aa)) constitute an EngB-type G domain. Residues 30-37 (GRSNVGKS), 57-61 (GKTQT), 75-78 (DVPG), 142-145 (TKAD), and 174-176 (FSS) each bind GTP. Mg(2+)-binding residues include S37 and T59.

This sequence belongs to the TRAFAC class TrmE-Era-EngA-EngB-Septin-like GTPase superfamily. EngB GTPase family. Mg(2+) serves as cofactor.

Its function is as follows. Necessary for normal cell division and for the maintenance of normal septation. This is Probable GTP-binding protein EngB from Listeria monocytogenes serovar 1/2a (strain ATCC BAA-679 / EGD-e).